Reading from the N-terminus, the 291-residue chain is Co-chaperone protein DjlA (291 aa).

Residues 1–6 (MRYWGK) lie on the Periplasmic side of the membrane. A helical transmembrane segment spans residues 7 to 31 (LLGLALGIVSSTGIWGMIMGLLMGH). At 32-291 (WIDRARASRR…ELLKSANQTK (260 aa)) the chain is on the cytoplasmic side. Residues 177–223 (ESPTGQQSRQNQSRQNGKSQQRRNNGYSNGHSYGGQRPPSPLRGPTV) form a disordered region. A compositionally biased stretch (low complexity) spans 181-211 (GQQSRQNQSRQNGKSQQRRNNGYSNGHSYGG). In terms of domain architecture, J spans 225–291 (SACRTLGVRS…ELLKSANQTK (67 aa)).

Homodimer.

It localises to the cell inner membrane. Regulatory DnaK co-chaperone. Direct interaction between DnaK and DjlA is needed for the induction of the wcaABCDE operon, involved in the synthesis of a colanic acid polysaccharide capsule, possibly through activation of the RcsB/RcsC phosphotransfer signaling pathway. The colanic acid capsule may help the bacterium survive conditions outside the host. The protein is Co-chaperone protein DjlA of Pectobacterium atrosepticum (strain SCRI 1043 / ATCC BAA-672) (Erwinia carotovora subsp. atroseptica).